We begin with the raw amino-acid sequence, 723 residues long: Delta-like protein 1 (723 aa).

The signal sequence occupies residues 1–17; sequence MGSRCALALAVLSALLC. The Extracellular segment spans residues 18–545; sequence QVWSSGVFEL…LEGQGGPFPW (528 aa). In terms of domain architecture, DSL spans 177–221; it reads FVCDEHYYGEGCSVFCRPRDDAFGHFTCGERGEKVCNPGWKGPYC. Cystine bridges form between cysteine 179-cysteine 188, cysteine 192-cysteine 204, cysteine 212-cysteine 221, cysteine 226-cysteine 237, cysteine 230-cysteine 243, cysteine 245-cysteine 254, cysteine 257-cysteine 268, cysteine 263-cysteine 274, cysteine 276-cysteine 285, cysteine 292-cysteine 304, cysteine 298-cysteine 314, cysteine 316-cysteine 325, cysteine 332-cysteine 343, cysteine 337-cysteine 352, cysteine 354-cysteine 363, cysteine 370-cysteine 381, cysteine 375-cysteine 391, cysteine 393-cysteine 402, cysteine 409-cysteine 420, cysteine 414-cysteine 429, cysteine 431-cysteine 440, cysteine 447-cysteine 458, cysteine 452-cysteine 467, cysteine 469-cysteine 478, cysteine 485-cysteine 496, cysteine 490-cysteine 505, and cysteine 507-cysteine 516. EGF-like domains lie at 226 to 254, 257 to 285, and 292 to 325; these read CLPG…GRYC, CIRY…GLFC, and CTHH…GATC. The 32-residue stretch at 332–363 folds into the EGF-like 4; calcium-binding domain; it reads CDPSPCKNGGSCTDLENSYSCTCPPGFYGKIC. 2 EGF-like domains span residues 370–402 and 409–440; these read CADG…GFNC and CSSS…GRHC. The EGF-like 7; calcium-binding domain maps to 447 to 478; that stretch reads CASSPCANGGTCRDGVNDFSCTCPPGYTGRNC. An N-linked (GlcNAc...) asparagine glycan is attached at asparagine 477. One can recognise an EGF-like 8 domain in the interval 485–516; the sequence is CEHAPCHNGATCHERGHRYVCECARGYGGPNC. A helical membrane pass occupies residues 546–568; the sequence is VAVCAGVILVLMLLLGCAAVVVC. Over 569–723 the chain is Cytoplasmic; it reads VRLRLQKHRP…KDECVIATEV (155 aa). Lysine 613 is covalently cross-linked (Glycyl lysine isopeptide (Lys-Gly) (interchain with G-Cter in ubiquitin)). Residues 653–664 show a composition bias toward basic and acidic residues; the sequence is AVRDAHSKRDTK. The interval 653-702 is disordered; that stretch reads AVRDAHSKRDTKCQPQGSSGEEKGTPTTLRGGEASERKRPDSGCSTSKDT. The residue at position 694 (serine 694) is a Phosphoserine; by PKB. Serine 697 carries the phosphoserine modification. The interaction with MAGI1 stretch occupies residues 720–723; it reads ATEV.

As to quaternary structure, homodimer. Interacts with TJP1. Interacts with MAGI1 (via PDZ domain); forms a complex with CTNNB1 and CDH2 and promotes recruitment to the adherens junction and stabilization on the cell surface. Interacts with PSEN1; undergoes a presenilin-dependent gamma-secretase cleavage that releases a Dll1-intracellular form. Interacts with MFAP5. Interacts with MIB1. Interacts with NEURL1B; leads to ubiquitination. Interacts with NEURL1. Interacts with SYNJ2BP; enhances DLL1 protein stability, and promotes Notch signaling in endothelial cells. Interacts with MAGI1, MAGI2, MAGI3 and MPDZ. Interacts (via ubiquitin) with EPN1 (via IUM domain); binding with NOTCH1 attached to neighboring cell, promotes ligand ubiquitination and EPN1 interaction, leading to NECD transendocytosis and Notch signaling. Interacts with NOTCH1. Interacts with NOTCH2NLB; leading to promote Notch signaling pathway in a cell-autonomous manner through inhibition of cis DLL1-NOTCH2 interactions. Post-translationally, ubiquitinated by MIB (MIB1 or MIB2), leading to its endocytosis and subsequent degradation. Ubiquitinated; promotes recycling back to the plasma membrane and confers a strong affinity for NOTCH1. Multi-ubiquitination of Lys-613 by MIB1 promotes both cis and trans-interaction with NOTCH1, as well as activation of Notch signaling. Ubiquitinated by NEURL1B. In terms of processing, phosphorylated in a membrane association-dependent manner. Phosphorylation at Ser-697 requires the presence of Ser-694, whereas phosphorylation at Ser-694 occurs independently of the other site. Phosphorylation is required for full ligand activity in vitro and affects surface presentation, ectodomain shedding, and endocytosis. O-fucosylated. Can be elongated to a disaccharide by MFNG. In terms of tissue distribution, expressed in heart and pancreas, with lower expression in brain and muscle and almost no expression in placenta, lung, liver and kidney.

It localises to the apical cell membrane. The protein resides in the cell junction. It is found in the adherens junction. Its subcellular location is the membrane raft. Transmembrane ligand protein of NOTCH1, NOTCH2 and NOTCH3 receptors that binds the extracellular domain (ECD) of Notch receptor in a cis and trans fashion manner. Following transinteraction, ligand cells produce mechanical force that depends of a clathrin-mediated endocytosis, requiring ligand ubiquitination, EPN1 interaction, and actin polymerisation; these events promote Notch receptor extracellular domain (NECD) transendocytosis and triggers Notch signaling through induction of cleavage, hyperphosphorylation, and nuclear accumulation of the intracellular domain of Notch receptors (NICD). Is required for embryonic development and maintenance of adult stem cells in many different tissues and immune systeme; the DLL1-induced Notch signaling is mediated through an intercellular communication that regulates cell lineage, cell specification, cell patterning and morphogenesis through effects on differentiation and proliferation. Plays a role in brain development at different level, namely by regulating neuronal differentiation of neural precursor cells via cell-cell interaction, most likely through the lateral inhibitory system in an endogenous level dependent-manner. During neocortex development, Dll1-Notch signaling transmission is mediated by dynamic interactions between intermediate neurogenic progenitors and radial glia; the cell-cell interactions are mediated via dynamic and transient elongation processes, likely to reactivate/maintain Notch activity in neighboring progenitors, and coordinate progenitor cell division and differentiation across radial and zonal boundaries. During cerebellar development, regulates Bergmann glial monolayer formation and its morphological maturation through a Notch signaling pathway. At the retina and spinal cord level, regulates neurogenesis by preventing the premature differentiation of neural progenitors and also by maintaining progenitors in spinal cord through Notch signaling pathway. Also controls neurogenesis of the neural tube in a progenitor domain-specific fashion along the dorsoventral axis. Maintains quiescence of neural stem cells and plays a role as a fate determinant that segregates asymmetrically to one daughter cell during neural stem cells mitosis, resulting in neuronal differentiation in Dll1-inheriting cell. Plays a role in immune systeme development, namely the development of all T-cells and marginal zone (MZ) B-cells. Blocks the differentiation of progenitor cells into the B-cell lineage while promoting the emergence of a population of cells with the characteristics of a T-cell/NK-cell precursor. Also plays a role during muscle development. During early development, inhibits myoblasts differentiation from the medial dermomyotomal lip and later regulates progenitor cell differentiation. Directly modulates cell adhesion and basal lamina formation in satellite cells through Notch signaling. Maintains myogenic progenitors pool by suppressing differentiation through down-regulation of MYOD1 and is required for satellite cell homing and PAX7 expression. During craniofacial and trunk myogenesis suppresses differentiation of cranial mesoderm-derived and somite-derived muscle via MYOD1 regulation but in cranial mesoderm-derived progenitors, is neither required for satellite cell homing nor for PAX7 expression. Also plays a role during pancreatic cell development. During type B pancreatic cell development, may be involved in the initiation of proximodistal patterning in the early pancreatic epithelium. Stimulates multipotent pancreatic progenitor cells proliferation and pancreatic growth by maintaining HES1 expression and PTF1A protein levels. During fetal stages of development, is required to maintain arterial identity and the responsiveness of arterial endothelial cells for VEGFA through regulation of KDR activation and NRP1 expression. Controls sprouting angiogenesis and subsequent vertical branch formation through regulation on tip cell differentiation. Negatively regulates goblet cell differentiation in intestine and controls secretory fat commitment through lateral inhibition in small intestine. Plays a role during inner ear development; negatively regulates auditory hair cell differentiation. Plays a role during nephron development through Notch signaling pathway. Regulates growth, blood pressure and energy homeostasis. This chain is Delta-like protein 1, found in Homo sapiens (Human).